The primary structure comprises 264 residues: Transcription initiation factor TFIID subunit 9 (264 aa).

The residue at position 5 (Lys-5) is an N6-acetyllysine. Residues 120–137 (YCLTAPNYRLKSLQKKAS) mediate DNA binding. Residues Ser-149, Ser-152, Ser-155, and Ser-158 each carry the phosphoserine modification. Residues 149–176 (SVGSVTSRPSTPTLGTPTPQTMSVSTKV) form a disordered region. Residues 151-176 (GSVTSRPSTPTLGTPTPQTMSVSTKV) show a composition bias toward polar residues. Phosphothreonine is present on residues Thr-159, Thr-161, Thr-164, and Thr-178. Residues Ser-181 and Ser-196 each carry the phosphoserine modification. Over residues 232-243 (SSQNTANESSNA) the composition is skewed to polar residues. The segment at 232-264 (SSQNTANESSNALKRKREDDDDDDDDDDDYDNL) is disordered. Residues 250-264 (DDDDDDDDDDDYDNL) show a composition bias toward acidic residues.

It belongs to the TAF9 family. Component of the TFIID basal transcription factor complex, composed of TATA-box-binding protein TBP, and a number of TBP-associated factors (TAFs), including TAF1, TAF2, TAF3, TAF4, TAF5, TAF6, TAF7, TAF8, TAF9, TAF10, TAF11, TAF12 and TAF13. Component of the TATA-binding protein-free TAF complex (TFTC), the PCAF histone acetylase complex and the STAGA transcription coactivator-HAT complex. The PCAF complex consists at least of TADA2L/ADA2, SUPT3H/SPT3, TADA3L/ADA3, TAF5L/PAF65-beta, TAF6L/PAF65-alpha, TAF10/TAFII30, TAF12/TAFII20, TAF9/TAFII31 and TRRAP. The STAGA transcription coactivator-HAT complex consists at least of SUPT3H, GCN5L2, SUPT7L, TAF5L, TAF6L, TADA3L, TAD1L, TAF10, TAF12, TRRAP and TAF9. Binds N-terminal domain of p53/TP53 which is essential for transcription. Component of some MLL1/MLL complex, at least composed of the core components KMT2A/MLL1, ASH2L, HCFC1/HCF1, WDR5 and RBBP5, as well as the facultative components BACC1, CHD8, E2F6, HSP70, INO80C, KANSL1, LAS1L, MAX, MCRS1, MGA, MYST1/MOF, PELP1, PHF20, PRP31, RING2, RUVB1/TIP49A, RUVB2/TIP49B, SENP3, TAF1, TAF4, TAF6, TAF7, TAF9 and TEX10. Binds TFIIB and the Herpes simplex virus activator VP16. Forms a heterodimer with TAF6 in a complex with the TAF4B-TAF12 heterodimer. Also interacts with TAF5. Binds directly DNA. Increased DNA binding when complexed with TAF6.

Its subcellular location is the nucleus. Functionally, the TFIID basal transcription factor complex plays a major role in the initiation of RNA polymerase II (Pol II)-dependent transcription. TFIID recognizes and binds promoters with or without a TATA box via its subunit TBP, a TATA-box-binding protein, and promotes assembly of the pre-initiation complex (PIC). The TFIID complex consists of TBP and TBP-associated factors (TAFs), including TAF1, TAF2, TAF3, TAF4, TAF5, TAF6, TAF7, TAF8, TAF9, TAF10, TAF11, TAF12 and TAF13. TAF9 is also a component of the TBP-free TAFII complex (TFTC), the PCAF histone acetylase complex and the STAGA transcription coactivator-HAT complex. TAF9 and its paralog TAF9B are involved in transcriptional activation as well as repression of distinct but overlapping sets of genes. Essential for cell viability. May have a role in gene regulation associated with apoptosis. This Homo sapiens (Human) protein is Transcription initiation factor TFIID subunit 9 (TAF9).